The sequence spans 484 residues: UDP-N-acetylmuramate--L-alanine ligase (484 aa).

126–132 (GTHGKTT) serves as a coordination point for ATP.

This sequence belongs to the MurCDEF family.

The protein resides in the cytoplasm. The enzyme catalyses UDP-N-acetyl-alpha-D-muramate + L-alanine + ATP = UDP-N-acetyl-alpha-D-muramoyl-L-alanine + ADP + phosphate + H(+). The protein operates within cell wall biogenesis; peptidoglycan biosynthesis. Its function is as follows. Cell wall formation. The polypeptide is UDP-N-acetylmuramate--L-alanine ligase (Aeromonas hydrophila subsp. hydrophila (strain ATCC 7966 / DSM 30187 / BCRC 13018 / CCUG 14551 / JCM 1027 / KCTC 2358 / NCIMB 9240 / NCTC 8049)).